A 289-amino-acid chain; its full sequence is Rhodopsin (289 aa).

Residues 1-7 (YLVNPAG) are Extracellular-facing. A helical membrane pass occupies residues 8 to 32 (YAALGAYMFLLILIGSPVNFLTLYV). The Cytoplasmic portion of the chain corresponds to 33 to 44 (TLEHKKLRTPLN). A helical transmembrane segment spans residues 45–67 (YILLNLAVADLFMVLGGFTTTMY). Over 68 to 81 (TSMHGYSVLGRLGC) the chain is Extracellular. The cysteines at positions 81 and 158 are disulfide-linked. Residues 82 to 104 (ILEGFFATLGGEIALWSLVVLAI) form a helical membrane-spanning segment. Residues 105 to 107 (ERW) carry the 'Ionic lock' involved in activated form stabilization motif. Topologically, residues 105-123 (ERWIVVCKPISNFRFTEDH) are cytoplasmic. A helical membrane pass occupies residues 124–144 (AIMGLAFSWVMALACAVPPLV). Topologically, residues 145–173 (GWSRYIPEGMQCSCGVDYYTRAEGFNNES) are extracellular. The N-linked (GlcNAc...) asparagine glycan is linked to Asn-171. A helical membrane pass occupies residues 174 to 195 (FVIYMFIVHFLIPLSVIFFCYG). Topologically, residues 196–223 (RLLCAVKEAAAAQQESETTQRPEKEVTR) are cytoplasmic. A helical transmembrane segment spans residues 224 to 245 (MVVIMVIAFLVCCLPNASVAWW). Residues 246-257 (IFCNQGSDFGPI) lie on the Extracellular side of the membrane. Residues 258–279 (FMTLPSFFAKSAAIYNPMIYIC) form a helical membrane-spanning segment. An N6-(retinylidene)lysine modification is found at Lys-267. The Cytoplasmic portion of the chain corresponds to 280-289 (MNKQFRHCMI).

Belongs to the G-protein coupled receptor 1 family. Opsin subfamily. Post-translationally, phosphorylated on some or all of the serine and threonine residues present in the C-terminal region. Contains one covalently linked retinal chromophore.

It is found in the membrane. It localises to the cell projection. The protein resides in the cilium. The protein localises to the photoreceptor outer segment. Its function is as follows. Photoreceptor required for image-forming vision at low light intensity. While most salt water fish species use retinal as chromophore, most freshwater fish use 3-dehydroretinal, or a mixture of retinal and 3-dehydroretinal. Light-induced isomerization of 11-cis to all-trans retinal triggers a conformational change that activates signaling via G-proteins. Subsequent receptor phosphorylation mediates displacement of the bound G-protein alpha subunit by arrestin and terminates signaling. This chain is Rhodopsin (rho), found in Limnocottus bergianus.